The sequence spans 541 residues: Atlastin-3 (541 aa).

The disordered stretch occupies residues 1 to 22 (MLSPQRTAAVASRGAGDAMENG). The N-terminal hypervariable region (HVR) stretch occupies residues 1–25 (MLSPQRTAAVASRGAGDAMENGKPG). The Cytoplasmic portion of the chain corresponds to 1–445 (MLSPQRTAAV…NVFSTFRTPA (445 aa)). The 249-residue stretch at 57 to 305 (DLDVVVVSVA…LIPYVLNPSK (249 aa)) folds into the GB1/RHD3-type G domain. R70, K71, G72, K73, S74, F75, and R109 together coordinate GDP. D142 is a binding site for Mg(2+). The GDP site is built by R213, D214, V272, and S275. The interval 343–434 (MLQATAEANN…YENFCKHNGS (92 aa)) is 3HB (three-helix bundle) domain. Position 391 is an N6-acetyllysine (K391). A helical transmembrane segment spans residues 446-466 (VLFTGIAALYIASGFTGFIGL). E467 is a topological domain (lumenal). Residues 468–488 (VVAQLFNCMVGLLLIALLTWG) form a helical membrane-spanning segment. At 489–541 (YIRYSGQYRELGGAIDSGAAYVLEQASSHIGNSTQAAVRDAVVGRPPADKKSQ) the chain is on the cytoplasmic side.

The protein belongs to the TRAFAC class dynamin-like GTPase superfamily. GB1/RHD3 GTPase family. GB1 subfamily. In terms of assembly, monomeric and homodimeric. The homodimer, transiently formed by two molecules on opposing membranes, is the active form mediating ER membrane fusion. Interacts with ZFYVE27; both proteins are involved in endoplasmic reticulum tubular network organization. Interacts with REEP5; both proteins are involved in endoplasmic reticulum tubular network organization. Expressed in cardiomyocytes (at protein level).

Its subcellular location is the endoplasmic reticulum membrane. The catalysed reaction is GTP + H2O = GDP + phosphate + H(+). Atlastin-3 (ATL3) is a membrane-anchored GTPase that mediates the GTP-dependent fusion of endoplasmic reticulum (ER) membranes, maintaining the continuous ER network. It facilitates the formation of three-way junctions where ER tubules intersect. Two atlastin-3 on neighboring ER tubules bind GTP and form loose homodimers through the GB1/RHD3-type G domains and 3HB regions. Upon GTP hydrolysis, the 3HB regions tighten, pulling the membranes together to drive their fusion. After fusion, the homodimer disassembles upon release of inorganic phosphate (Pi). Subsequently, GDP dissociates, resetting the monomers to a conformation ready for a new fusion cycle. The protein is Atlastin-3 of Mus musculus (Mouse).